The sequence spans 261 residues: Thiamine thiazole synthase (261 aa).

Residues Ala33, 52 to 53 (ER), Gly60, Val124, and 152 to 154 (HVD) each bind NAD(+). Fe cation contacts are provided by Asp154 and His169. Ile219 serves as a coordination point for NAD(+). Arg229 serves as a coordination point for glycine.

Belongs to the THI4 family. In terms of assembly, homooctamer; tetramer of dimers. Fe(2+) serves as cofactor.

It catalyses the reaction hydrogen sulfide + glycine + NAD(+) = ADP-5-ethyl-4-methylthiazole-2-carboxylate + nicotinamide + 3 H2O + H(+). It functions in the pathway cofactor biosynthesis; thiamine diphosphate biosynthesis. Functionally, involved in the biosynthesis of the thiazole moiety of thiamine. Catalyzes the conversion of NAD and glycine to adenosine diphosphate 5-(2-hydroxyethyl)-4-methylthiazole-2-carboxylate (ADT), an adenylated thiazole intermediate, using free sulfide as a source of sulfur. The protein is Thiamine thiazole synthase of Pyrobaculum aerophilum (strain ATCC 51768 / DSM 7523 / JCM 9630 / CIP 104966 / NBRC 100827 / IM2).